Here is a 268-residue protein sequence, read N- to C-terminus: Ubiquinone biosynthesis protein COQ4 homolog, mitochondrial (268 aa).

Residues 1 to 25 (MMQRCLRLQKPLALRRGLHLAQVNS) constitute a mitochondrion transit peptide. Residues histidine 171, aspartate 172, histidine 175, and glutamate 187 each coordinate Zn(2+).

This sequence belongs to the COQ4 family. Component of a multi-subunit COQ enzyme complex. The cofactor is Zn(2+).

It is found in the mitochondrion inner membrane. It carries out the reaction a 4-hydroxy-3-methoxy-5-(all-trans-polyprenyl)benzoate + H(+) = a 2-methoxy-6-(all-trans-polyprenyl)phenol + CO2. It functions in the pathway cofactor biosynthesis; ubiquinone biosynthesis. Its function is as follows. Lyase that catalyzes the C1-decarboxylation of 4-hydroxy-3-methoxy-5-(all-trans-polyprenyl)benzoic acid into 2-methoxy-6-(all-trans-polyprenyl)phenol during ubiquinone biosynthesis. This chain is Ubiquinone biosynthesis protein COQ4 homolog, mitochondrial, found in Drosophila simulans (Fruit fly).